A 617-amino-acid chain; its full sequence is MKVSLGNGDMGVSAHLQPCKSGTTRFFTSNTHSSVVLQGFDQLRIEGLLCDVTLVPGDGEEIFPVHRAMMASASDYFKAMFTGGMKEKDLMCIKLHGVNKVGLKKIIDFIYTAKLSLNMDNLQDTLEAASFLQILPVLDFCKVFLISGVSLDNCVEVGRIANTYNLIEVDKYVNNFILKNFPALLNTGEFLKLPFERLAFVLSSNSLKHCSELELFKAACRWLRLEDPRMDYAAKLMKNIRFPLMTPQDLINYVQTVDFMRTDNTCVNLLLEASNYQMMPYMQPVMQSDRTAIRSDSTHLVTLGGVLRQQLVVSKELRMYDERAQEWKSLAPMDAPRYQHGIAVIGNFLYVVGGQSNYDTKGKTAVDTVFRFDPRYNKWMQVASLNEKRTFFHLSALKGHLYAVGGRSAAGELATVECYNPRMNEWSYVAKMSEPHYGHAGTVYGGLMYISGGITHDTFQNELMCFDPDTDKWTQKAPMTTVRGLHCMCTVGDKLYVIGGNHFRGTSDYDDVLSCEYYSPTLDQWTPIAAMLRGQSDVGVAVFENKIYVVGGYSWNNRCMVEIVQKYDPEKDEWHKVFDLPESLGGIRACTLTVFPPEENPGSPSRESPLSAPSDHS.

The BTB domain maps to 50 to 119; it reads CDVTLVPGDG…IYTAKLSLNM (70 aa). One can recognise a BACK domain in the interval 154-255; sequence CVEVGRIANT…TPQDLINYVQ (102 aa). Kelch repeat units lie at residues 299–347, 348–399, 400–446, 448–493, 495–545, and 546–594; these read HLVT…VIGN, FLYV…ALKG, HLYA…VYGG, MYIS…TVGD, LYVI…VFEN, and KIYV…TLTV. Residues 595–617 are disordered; sequence FPPEENPGSPSRESPLSAPSDHS.

As to quaternary structure, component of the BCR(KLHL9-KLHL13) E3 ubiquitin ligase complex, at least composed of CUL3, KLHL9, KLHL13 and RBX1. Interacts with AURKB.

It functions in the pathway protein modification; protein ubiquitination. Its function is as follows. Substrate-specific adapter of a BCR (BTB-CUL3-RBX1) E3 ubiquitin-protein ligase complex required for mitotic progression and cytokinesis. The BCR(KLHL9-KLHL13) E3 ubiquitin ligase complex mediates the ubiquitination of AURKB and controls the dynamic behavior of AURKB on mitotic chromosomes and thereby coordinates faithful mitotic progression and completion of cytokinesis. This chain is Kelch-like protein 9 (Klhl9), found in Mus musculus (Mouse).